Consider the following 105-residue polypeptide: Nitrogen fixation nifHD2 region GlnB-like protein 1 (105 aa).

Belongs to the P(II) protein family.

Functionally, could be involved in the regulation of nitrogen fixation. The polypeptide is Nitrogen fixation nifHD2 region GlnB-like protein 1 (Methanosarcina barkeri).